The sequence spans 224 residues: Mammalian ependymin-related protein 1 (224 aa).

An N-terminal signal peptide occupies residues 1–37 (MLTRAPRRLVQGPRETWLLGGLWVWILCGLGMAGSPG). 3 disulfides stabilise this stretch: Cys-42–Cys-172, Cys-88–Cys-222, and Cys-113–Cys-210. Residues Asn-130 and Asn-182 are each glycosylated (N-linked (GlcNAc...) asparagine).

The protein belongs to the ependymin family. Homodimer. N-glycosylated; the glycan contains mannose-6-phosphate moieties. As to expression, detected in brain (at protein level).

The protein localises to the lysosome lumen. It localises to the secreted. Functionally, binds anionic lipids and gangliosides at acidic pH. The protein is Mammalian ependymin-related protein 1 (Epdr1) of Rattus norvegicus (Rat).